A 94-amino-acid polypeptide reads, in one-letter code: DNA-binding protein HU (94 aa).

This sequence belongs to the bacterial histone-like protein family. Homodimer.

In terms of biological role, histone-like DNA-binding protein which is capable of wrapping DNA to stabilize it, and thus to prevent its denaturation under extreme environmental conditions. It is essential for heterocyst differentiation. This is DNA-binding protein HU (hup) from Nostoc sp. (strain PCC 7120 / SAG 25.82 / UTEX 2576).